A 142-amino-acid polypeptide reads, in one-letter code: Large ribosomal subunit protein uL13 (142 aa).

It belongs to the universal ribosomal protein uL13 family. As to quaternary structure, part of the 50S ribosomal subunit.

This protein is one of the early assembly proteins of the 50S ribosomal subunit, although it is not seen to bind rRNA by itself. It is important during the early stages of 50S assembly. The sequence is that of Large ribosomal subunit protein uL13 from Pseudomonas syringae pv. tomato (strain ATCC BAA-871 / DC3000).